The chain runs to 893 residues: Zinc finger protein 281 (893 aa).

Disordered stretches follow at residues Met1–Gln113, Ile126–Tyr148, Ala153–Val172, and Ser198–Leu251. Lys2 is covalently cross-linked (Glycyl lysine isopeptide (Lys-Gly) (interchain with G-Cter in SUMO2)). Residues Phe7–Gly36 are compositionally biased toward gly residues. Residues Lys100 and Lys127 each participate in a glycyl lysine isopeptide (Lys-Gly) (interchain with G-Cter in SUMO2) cross-link. Positions Lys127–Ser139 are enriched in basic and acidic residues. Gly residues predominate over residues Gly161–His170. The span at Arg201 to Val216 shows a compositional bias: basic and acidic residues. Residues Lys211, Lys217, Lys223, Lys230, Lys240, and Lys256 each participate in a glycyl lysine isopeptide (Lys-Gly) (interchain with G-Cter in SUMO2) cross-link. 3 C2H2-type zinc fingers span residues His258–His280, Phe286–His308, and Phe314–His336. Glycyl lysine isopeptide (Lys-Gly) (interchain with G-Cter in SUMO2) cross-links involve residues Lys298 and Lys322. The C2H2-type 4; atypical zinc finger occupies Tyr342–Cys364. A Glycyl lysine isopeptide (Lys-Gly) (interchain with G-Cter in SUMO2) cross-link involves residue Lys370. Positions Gly371–Met425 are disordered. The segment covering Pro377–Thr396 has biased composition (polar residues). Position 392 is a phosphoserine (Ser392). Residues Lys406, Lys413, Lys457, and Lys474 each participate in a glycyl lysine isopeptide (Lys-Gly) (interchain with G-Cter in SUMO2) cross-link. Residue Ser481 is modified to Phosphoserine. Glycyl lysine isopeptide (Lys-Gly) (interchain with G-Cter in SUMO2) cross-links involve residues Lys490, Lys495, Lys536, Lys596, Lys614, and Lys619. The tract at residues Gly613–Lys658 is disordered. Residues Glu616 to Leu641 show a composition bias toward basic and acidic residues. The span at Glu645–Lys658 shows a compositional bias: polar residues. Position 648 is a phosphoserine (Ser648). Residues Lys658 and Lys667 each participate in a glycyl lysine isopeptide (Lys-Gly) (interchain with G-Cter in SUMO2) cross-link. The segment covering Ser775–Asp813 has biased composition (polar residues). The segment at Ser775–Gln815 is disordered. Residue Ser782 is modified to Phosphoserine. Residues Lys784, Lys789, and Lys793 each participate in a glycyl lysine isopeptide (Lys-Gly) (interchain with G-Cter in SUMO2) cross-link. Phosphoserine is present on Ser805. Residues Lys816 and Lys838 each participate in a glycyl lysine isopeptide (Lys-Gly) (interchain with G-Cter in SUMO2) cross-link. Residue Thr886 is modified to Phosphothreonine.

It belongs to the krueppel C2H2-type zinc-finger protein family. In terms of assembly, interacts with NANOG. Associates with the NuRD complex.

The protein resides in the nucleus. Its function is as follows. Transcription repressor that plays a role in regulation of embryonic stem cells (ESCs) differentiation. Required for ESCs differentiation and acts by mediating autorepression of NANOG in ESCs: binds to the NANOG promoter and promotes association of NANOG protein to its own promoter and recruits the NuRD complex, which deacetylates histones. Not required for establishement and maintenance of ESCs. Represses the transcription of a number of genes including GAST, ODC1 and VIM. Binds to the G-rich box in the enhancer region of these genes. The sequence is that of Zinc finger protein 281 (Znf281) from Mus musculus (Mouse).